We begin with the raw amino-acid sequence, 194 residues long: Fe/S biogenesis protein NfuA (194 aa).

The [4Fe-4S] cluster site is built by cysteine 151 and cysteine 154.

The protein belongs to the NfuA family. Homodimer. [4Fe-4S] cluster is required as a cofactor.

In terms of biological role, involved in iron-sulfur cluster biogenesis. Binds a 4Fe-4S cluster, can transfer this cluster to apoproteins, and thereby intervenes in the maturation of Fe/S proteins. Could also act as a scaffold/chaperone for damaged Fe/S proteins. This chain is Fe/S biogenesis protein NfuA, found in Actinobacillus succinogenes (strain ATCC 55618 / DSM 22257 / CCUG 43843 / 130Z).